A 330-amino-acid chain; its full sequence is Probable WRKY transcription factor 39 (330 aa).

Residues 256 to 322 (KIADIPPDEY…YEGEHNHSRI (67 aa)) constitute a DNA-binding region (WRKY).

Its subcellular location is the nucleus. Transcription factor. Interacts specifically with the W box (5'-(T)TGAC[CT]-3'), a frequently occurring elicitor-responsive cis-acting element. The chain is Probable WRKY transcription factor 39 (WRKY39) from Arabidopsis thaliana (Mouse-ear cress).